A 337-amino-acid polypeptide reads, in one-letter code: DNA-directed RNA polymerase subunit alpha (337 aa).

The interval Met-1–Glu-233 is alpha N-terminal domain (alpha-NTD). Residues Ile-267–Phe-337 form an alpha C-terminal domain (alpha-CTD) region.

Belongs to the RNA polymerase alpha chain family. In terms of assembly, in plastids the minimal PEP RNA polymerase catalytic core is composed of four subunits: alpha, beta, beta', and beta''. When a (nuclear-encoded) sigma factor is associated with the core the holoenzyme is formed, which can initiate transcription.

The protein localises to the plastid. The protein resides in the chloroplast. It carries out the reaction RNA(n) + a ribonucleoside 5'-triphosphate = RNA(n+1) + diphosphate. DNA-dependent RNA polymerase catalyzes the transcription of DNA into RNA using the four ribonucleoside triphosphates as substrates. The sequence is that of DNA-directed RNA polymerase subunit alpha from Oryza nivara (Indian wild rice).